Consider the following 459-residue polypeptide: Elongation factor 1-alpha 2 (459 aa).

A tr-type G domain is found at 5–242; that stretch reads KTHINIVVIG…DCIIPPQRPT (238 aa). The G1 stretch occupies residues 14 to 21; that stretch reads GHVDSGKS. Residues 70 to 74 form a G2 region; the sequence is GITID. The interval 91-94 is G3; sequence DAPG. The tract at residues 153–156 is G4; sequence NKMD. Positions 194–196 are G5; the sequence is SGF. 5-glutamyl glycerylphosphorylethanolamine occurs at positions 301 and 374.

It belongs to the TRAFAC class translation factor GTPase superfamily. Classic translation factor GTPase family. EF-Tu/EF-1A subfamily.

Its subcellular location is the cytoplasm. This protein promotes the GTP-dependent binding of aminoacyl-tRNA to the A-site of ribosomes during protein biosynthesis. The sequence is that of Elongation factor 1-alpha 2 (eft-2) from Oscheius tipulae.